The chain runs to 246 residues: Uridylate kinase (246 aa).

20–23 (KISG) contributes to the ATP binding site. Positions 28 to 33 (GDQGYG) are involved in allosteric activation by GTP. A UMP-binding site is contributed by glycine 62. Glycine 63 and arginine 67 together coordinate ATP. UMP contacts are provided by residues aspartate 82 and 143-150 (TGNPYFTT). ATP is bound by residues threonine 170, tyrosine 176, and aspartate 179.

The protein belongs to the UMP kinase family. As to quaternary structure, homohexamer.

Its subcellular location is the cytoplasm. It catalyses the reaction UMP + ATP = UDP + ADP. It participates in pyrimidine metabolism; CTP biosynthesis via de novo pathway; UDP from UMP (UMPK route): step 1/1. Allosterically activated by GTP. Inhibited by UTP. Its function is as follows. Catalyzes the reversible phosphorylation of UMP to UDP. The sequence is that of Uridylate kinase from Cereibacter sphaeroides (strain ATCC 17023 / DSM 158 / JCM 6121 / CCUG 31486 / LMG 2827 / NBRC 12203 / NCIMB 8253 / ATH 2.4.1.) (Rhodobacter sphaeroides).